The chain runs to 136 residues: Psoriasis susceptibility 1 candidate gene 2 protein homolog (136 aa).

An N-terminal signal peptide occupies residues 1-22 (MILNWKLLGILVLCLHTRGISG). A disordered region spans residues 20-136 (ISGSEDHPSH…DLDPPREEYR (117 aa)). A compositionally biased stretch (basic and acidic residues) spans 23–33 (SEDHPSHPPAE). Pro residues-rich tracts occupy residues 44–74 (PQGP…PPWR) and 83–116 (PPEP…PPAP). A compositionally biased stretch (basic and acidic residues) spans 117-136 (EVDHRPQEEPDLDPPREEYR).

It localises to the secreted. The protein is Psoriasis susceptibility 1 candidate gene 2 protein homolog (PSORS1C2) of Pan troglodytes (Chimpanzee).